We begin with the raw amino-acid sequence, 336 residues long: Foldase protein PrsA (336 aa).

The first 22 residues, 1 to 22 (MKSAKKLLSVLCLGIFILTFTA), serve as a signal peptide directing secretion. Residue Cys-23 is the site of N-palmitoyl cysteine attachment. A lipid anchor (S-diacylglycerol cysteine) is attached at Cys-23. A PpiC domain is found at 194–286 (PNTMNVSHIL…FGYHIIKINS (93 aa)).

Belongs to the PrsA family.

Its subcellular location is the cell membrane. It catalyses the reaction [protein]-peptidylproline (omega=180) = [protein]-peptidylproline (omega=0). Functionally, plays a major role in protein secretion by helping the post-translocational extracellular folding of several secreted proteins. This chain is Foldase protein PrsA, found in Clostridium botulinum (strain 657 / Type Ba4).